Here is a 176-residue protein sequence, read N- to C-terminus: Ribosome maturation factor RimM (176 aa).

The PRC barrel domain occupies glutamate 97–phenylalanine 176.

It belongs to the RimM family. In terms of assembly, binds ribosomal protein uS19.

It localises to the cytoplasm. In terms of biological role, an accessory protein needed during the final step in the assembly of 30S ribosomal subunit, possibly for assembly of the head region. Essential for efficient processing of 16S rRNA. May be needed both before and after RbfA during the maturation of 16S rRNA. It has affinity for free ribosomal 30S subunits but not for 70S ribosomes. In Shewanella putrefaciens (strain CN-32 / ATCC BAA-453), this protein is Ribosome maturation factor RimM.